A 795-amino-acid chain; its full sequence is RINT1-like protein MAG2 (795 aa).

The stretch at 35 to 64 forms a coiled coil; the sequence is TGLVSELQTEISELDQRLAGLNRQLESGLA. The interval 91-111 is disordered; sequence TSVTRSASDSGKEEEATEHVA. The span at 100-111 shows a compositional bias: basic and acidic residues; that stretch reads SGKEEEATEHVA. The RINT1/TIP20 domain maps to 207–795; sequence ALAMMRPQAI…KKVAKSRVFS (589 aa).

The protein belongs to the RINT1 family. In terms of assembly, interacts with SEC20 and SYP81. Interacts with ZW10 (via the central region). Forms a complex with ZW10/MIP1, MIP2 and MIP3 on the endoplasmic reticulum. Highly expressed in dry seeds. Expressed at low levels in roots, rosette and cauline leaves, stems and flowers.

The protein resides in the endoplasmic reticulum membrane. Functionally, functions in the anterograde transport of storage protein precursors from the endoplasmic reticulum (ER) to the Golgi complex and in the retrograde transport from the Golgi complex to the ER. Forms a complex with ZW10/MIP1, MIP2 and MIP3 on the ER that may be responsible for efficient transport of seed storage proteins. Required for the responses to environmental stresses during seed germination and vegetative growth. Probably not involved in the retrograde transport from the ER to the apoplast. The chain is RINT1-like protein MAG2 from Arabidopsis thaliana (Mouse-ear cress).